Here is a 94-residue protein sequence, read N- to C-terminus: Integration host factor subunit beta (94 aa).

This sequence belongs to the bacterial histone-like protein family. Heterodimer of an alpha and a beta chain.

This protein is one of the two subunits of integration host factor, a specific DNA-binding protein that functions in genetic recombination as well as in transcriptional and translational control. This Actinobacillus succinogenes (strain ATCC 55618 / DSM 22257 / CCUG 43843 / 130Z) protein is Integration host factor subunit beta.